We begin with the raw amino-acid sequence, 26 residues long: PRKCH upstream open reading frame 2 (26 aa).

In terms of assembly, interacts with protein kinase C eta as well as other protein kinases including PRKCD, PRKCQ and PRKCE but not with PRKCG or PRKCZ; the interactions lead to inhibition of kinase activity.

Functionally, product of an upstream open reading frame (ORF) of PRKCH which regulates translation of the downstream protein kinase C eta (PKC-eta) ORF. Functions as a repressive element that maintains low basal levels of PKC-eta in growing cells but enhances its expression during stress conditions induced by amino acid starvation in a EIF2AK4/GCN2-dependent manner. In addition to its role in regulating PKC-eta translation, also inhibits the kinase activity of PKC-eta as well as other protein kinases including PRKCD, PRKCQ and PRKCE but not PRKCA, PRKCG or PRKCZ. This chain is PRKCH upstream open reading frame 2, found in Homo sapiens (Human).